The chain runs to 360 residues: S-adenosylmethionine:tRNA ribosyltransferase-isomerase (360 aa).

Belongs to the QueA family. As to quaternary structure, monomer.

Its subcellular location is the cytoplasm. It carries out the reaction 7-aminomethyl-7-carbaguanosine(34) in tRNA + S-adenosyl-L-methionine = epoxyqueuosine(34) in tRNA + adenine + L-methionine + 2 H(+). The protein operates within tRNA modification; tRNA-queuosine biosynthesis. Transfers and isomerizes the ribose moiety from AdoMet to the 7-aminomethyl group of 7-deazaguanine (preQ1-tRNA) to give epoxyqueuosine (oQ-tRNA). This Rhodopseudomonas palustris (strain TIE-1) protein is S-adenosylmethionine:tRNA ribosyltransferase-isomerase.